The chain runs to 86 residues: uncharacterized protein (86 aa).

To M.jannaschii MJ1173.

This is an uncharacterized protein from Methanosarcina mazei (strain ATCC BAA-159 / DSM 3647 / Goe1 / Go1 / JCM 11833 / OCM 88) (Methanosarcina frisia).